Reading from the N-terminus, the 291-residue chain is Undecaprenyl-diphosphatase 2 (291 aa).

Transmembrane regions (helical) follow at residues 39–59 (PGAA…LIYF), 85–105 (ARMG…GLTL), 118–138 (ITAT…RMAA), 198–218 (AARY…VFEL), 231–251 (PTLF…AWFM), and 262–282 (FVWY…VGVL).

Belongs to the UppP family.

Its subcellular location is the cell membrane. It carries out the reaction di-trans,octa-cis-undecaprenyl diphosphate + H2O = di-trans,octa-cis-undecaprenyl phosphate + phosphate + H(+). In terms of biological role, catalyzes the dephosphorylation of undecaprenyl diphosphate (UPP). Confers resistance to bacitracin. This chain is Undecaprenyl-diphosphatase 2, found in Streptomyces coelicolor (strain ATCC BAA-471 / A3(2) / M145).